The following is a 545-amino-acid chain: Glucose-6-phosphate isomerase (545 aa).

The active-site Proton donor is Glu351. Residues His382 and Lys510 contribute to the active site.

It belongs to the GPI family.

It is found in the cytoplasm. The catalysed reaction is alpha-D-glucose 6-phosphate = beta-D-fructose 6-phosphate. It participates in carbohydrate biosynthesis; gluconeogenesis. Its pathway is carbohydrate degradation; glycolysis; D-glyceraldehyde 3-phosphate and glycerone phosphate from D-glucose: step 2/4. In terms of biological role, catalyzes the reversible isomerization of glucose-6-phosphate to fructose-6-phosphate. In Helicobacter pylori (strain HPAG1), this protein is Glucose-6-phosphate isomerase.